We begin with the raw amino-acid sequence, 367 residues long: uncharacterized protein (367 aa).

To M.tuberculosis Rv0502.

This is an uncharacterized protein from Mycobacterium leprae (strain TN).